Consider the following 312-residue polypeptide: Olfactory receptor 4F15 (312 aa).

Topologically, residues 1 to 25 (MNGMNHSVVSEFVFMGLTNSREIQL) are extracellular. A glycan (N-linked (GlcNAc...) asparagine) is linked at Asn5. Residues 26–49 (LLFVFSLLFYFASMMGNLVIVFTV) form a helical membrane-spanning segment. At 50-57 (TMDAHLHS) the chain is on the cytoplasmic side. A helical transmembrane segment spans residues 58 to 79 (PMYFLLANLSIIDMAFCSITAP). Residues 80-100 (KMICDIFKKHKAISFRGCITQ) are Extracellular-facing. Cys97 and Cys189 are disulfide-bonded. The helical transmembrane segment at 101–120 (IFFSHALGGTEMVLLIAMAF) threads the bilayer. The Cytoplasmic segment spans residues 121–139 (DRYMAICKPLHYLTIMSPR). A helical membrane pass occupies residues 140-158 (MCLYFLATSSIIGLIHSLV). Over 159–195 (QLVFVVDLPFCGPNIFDSFYCDLPRLLRLACTNTQEL) the chain is Extracellular. A helical transmembrane segment spans residues 196-219 (EFMVTVNSGLISVGSFVLLVISYI). The Cytoplasmic segment spans residues 220-235 (FILFTVWKHSSGGLAK). Residues 236–258 (ALSTLSAHVTVVILFFGPLMFFY) form a helical membrane-spanning segment. The Extracellular segment spans residues 259–269 (TWPSPTSHLDK). A helical transmembrane segment spans residues 270–289 (YLAIFDAFITPFLNPVIYTF). At 290–312 (RNKDMKVAMRRLCSRLAHFTKIL) the chain is on the cytoplasmic side.

Belongs to the G-protein coupled receptor 1 family.

It is found in the cell membrane. Its function is as follows. Odorant receptor. In Homo sapiens (Human), this protein is Olfactory receptor 4F15 (OR4F15).